A 583-amino-acid polypeptide reads, in one-letter code: Proteasome-associated ATPase (583 aa).

Residues 1-19 (METPNQDSGRTPTEQSAAN) are compositionally biased toward polar residues. The segment at 1-22 (METPNQDSGRTPTEQSAANDLS) is disordered. A coiled-coil region spans residues 24 to 75 (ADRQVNILRDKLRHIDRQLAAATQNNTKLVSMLETAKAEILRLKNALDQEGQ). Residue 271 to 276 (GCGKTL) participates in ATP binding. The interval 582-583 (YL) is docks into pockets in the proteasome alpha-ring.

It belongs to the AAA ATPase family. Homohexamer. Assembles into a hexameric ring structure that caps the 20S proteasome core. Strongly interacts with the prokaryotic ubiquitin-like protein Pup through a hydrophobic interface; the interacting region of ARC lies in its N-terminal coiled-coil domain. There is one Pup binding site per ARC hexamer ring. Upon ATP-binding, the C-terminus of ARC interacts with the alpha-rings of the proteasome core, possibly by binding to the intersubunit pockets.

Its pathway is protein degradation; proteasomal Pup-dependent pathway. Its function is as follows. ATPase which is responsible for recognizing, binding, unfolding and translocation of pupylated proteins into the bacterial 20S proteasome core particle. May be essential for opening the gate of the 20S proteasome via an interaction with its C-terminus, thereby allowing substrate entry and access to the site of proteolysis. Thus, the C-termini of the proteasomal ATPase may function like a 'key in a lock' to induce gate opening and therefore regulate proteolysis. In Pseudarthrobacter chlorophenolicus (strain ATCC 700700 / DSM 12829 / CIP 107037 / JCM 12360 / KCTC 9906 / NCIMB 13794 / A6) (Arthrobacter chlorophenolicus), this protein is Proteasome-associated ATPase.